The chain runs to 100 residues: Small ribosomal subunit protein uS14c (100 aa).

This sequence belongs to the universal ribosomal protein uS14 family. In terms of assembly, part of the 30S ribosomal subunit.

It is found in the plastid. The protein resides in the chloroplast. Its function is as follows. Binds 16S rRNA, required for the assembly of 30S particles. This is Small ribosomal subunit protein uS14c from Lotus japonicus (Lotus corniculatus var. japonicus).